Reading from the N-terminus, the 35-residue chain is Pheromone-binding protein 1 (35 aa).

It belongs to the PBP/GOBP family. Homodimer. As to expression, antenna.

Its function is as follows. This major soluble protein in olfactory sensilla of male moths might serve to solubilize the extremely hydrophobic pheromone molecules and to transport pheromone through the aqueous lymph to receptors located on olfactory cilia. The polypeptide is Pheromone-binding protein 1 (Lymantria dispar (Gypsy moth)).